A 70-amino-acid chain; its full sequence is Small ribosomal subunit protein bS21 (70 aa).

This sequence belongs to the bacterial ribosomal protein bS21 family.

The polypeptide is Small ribosomal subunit protein bS21 (Azoarcus sp. (strain BH72)).